The primary structure comprises 860 residues: Leucine--tRNA ligase (860 aa).

Positions Pro-42–His-52 match the 'HIGH' region motif. The 'KMSKS' region motif lies at Lys-619–Ser-623. Lys-622 serves as a coordination point for ATP.

It belongs to the class-I aminoacyl-tRNA synthetase family.

The protein localises to the cytoplasm. The enzyme catalyses tRNA(Leu) + L-leucine + ATP = L-leucyl-tRNA(Leu) + AMP + diphosphate. The polypeptide is Leucine--tRNA ligase (Histophilus somni (strain 129Pt) (Haemophilus somnus)).